The chain runs to 262 residues: Regulatory protein RecX (262 aa).

This sequence belongs to the RecX family.

It localises to the cytoplasm. Modulates RecA activity. This is Regulatory protein RecX from Photobacterium profundum (strain SS9).